Consider the following 180-residue polypeptide: Orotate phosphoribosyltransferase (180 aa).

5-phospho-alpha-D-ribose 1-diphosphate is bound by residues R95, K96, K99, and 121-129 (EDVTTTGGS). Orotate is bound by residues T125 and R153.

It belongs to the purine/pyrimidine phosphoribosyltransferase family. PyrE subfamily. As to quaternary structure, homodimer. Requires Mg(2+) as cofactor.

The enzyme catalyses orotidine 5'-phosphate + diphosphate = orotate + 5-phospho-alpha-D-ribose 1-diphosphate. Its pathway is pyrimidine metabolism; UMP biosynthesis via de novo pathway; UMP from orotate: step 1/2. Functionally, catalyzes the transfer of a ribosyl phosphate group from 5-phosphoribose 1-diphosphate to orotate, leading to the formation of orotidine monophosphate (OMP). This is Orotate phosphoribosyltransferase from Methanothermobacter thermautotrophicus (strain ATCC 29096 / DSM 1053 / JCM 10044 / NBRC 100330 / Delta H) (Methanobacterium thermoautotrophicum).